The sequence spans 374 residues: Eukaryotic translation initiation factor 3 subunit M (374 aa).

Positions 180-339 constitute a PCI domain; sequence TAAKVMVELL…RKVVVSHSTH (160 aa).

The protein belongs to the eIF-3 subunit M family. Component of the eukaryotic translation initiation factor 3 (eIF-3) complex, which is composed of 13 subunits: EIF3A, EIF3B, EIF3C, EIF3D, EIF3E, EIF3F, EIF3G, EIF3H, EIF3I, EIF3J, EIF3K, EIF3L and EIF3M.

It is found in the cytoplasm. Its function is as follows. Component of the eukaryotic translation initiation factor 3 (eIF-3) complex, which is involved in protein synthesis of a specialized repertoire of mRNAs and, together with other initiation factors, stimulates binding of mRNA and methionyl-tRNAi to the 40S ribosome. The eIF-3 complex specifically targets and initiates translation of a subset of mRNAs involved in cell proliferation. The protein is Eukaryotic translation initiation factor 3 subunit M of Gallus gallus (Chicken).